The primary structure comprises 153 residues: Ribosomal RNA large subunit methyltransferase H (153 aa).

Residues Leu70, Gly102, and 121-126 (LSRMTF) each bind S-adenosyl-L-methionine.

The protein belongs to the RNA methyltransferase RlmH family. In terms of assembly, homodimer.

The protein localises to the cytoplasm. It catalyses the reaction pseudouridine(1915) in 23S rRNA + S-adenosyl-L-methionine = N(3)-methylpseudouridine(1915) in 23S rRNA + S-adenosyl-L-homocysteine + H(+). Specifically methylates the pseudouridine at position 1915 (m3Psi1915) in 23S rRNA. In Geotalea daltonii (strain DSM 22248 / JCM 15807 / FRC-32) (Geobacter daltonii), this protein is Ribosomal RNA large subunit methyltransferase H.